The sequence spans 215 residues: Adenylate kinase (215 aa).

10–15 (GAGKGT) contributes to the ATP binding site. The tract at residues 30–59 (STGDMLRSAIKSGSELGKKAKQVMDAGQLV) is NMP. AMP is bound by residues threonine 31, arginine 36, 57–59 (QLV), 85–88 (GFPR), and glutamine 92. Positions 122-159 (GRRVHPGSGRVYHVEHNPPKVEGKDDETGEDLVVRPDD) are LID. Residues arginine 123 and 132–133 (VY) contribute to the ATP site. Positions 128–151 (GSGRVYHVEHNPPKVEGKDDETGE) are disordered. The span at 133 to 144 (YHVEHNPPKVEG) shows a compositional bias: basic and acidic residues. Arginine 156 and arginine 167 together coordinate AMP. The tract at residues 195–215 (KIDGTQPVERVSEQLGDLLRK) is disordered. Glutamine 200 is a binding site for ATP.

It belongs to the adenylate kinase family. In terms of assembly, monomer.

The protein resides in the cytoplasm. It carries out the reaction AMP + ATP = 2 ADP. It participates in purine metabolism; AMP biosynthesis via salvage pathway; AMP from ADP: step 1/1. Functionally, catalyzes the reversible transfer of the terminal phosphate group between ATP and AMP. Plays an important role in cellular energy homeostasis and in adenine nucleotide metabolism. This Idiomarina loihiensis (strain ATCC BAA-735 / DSM 15497 / L2-TR) protein is Adenylate kinase.